Here is a 550-residue protein sequence, read N- to C-terminus: Leiomodin-2 (550 aa).

Residues 1-47 form an interaction with tropomyosin alpha region; it reads MSTFGYRRGLSKYESIDEDELLASLSPEELKELERELEDIEPDRNLP. Interaction with actin stretches follow at residues 1-165, 166-500, and 524-543; these read MSTF…TDNS, KPKT…KEIK, and VHEN…LRRV. 3 positions are modified to phosphoserine: serine 11, serine 15, and serine 24. A compositionally biased stretch (basic and acidic residues) spans 84-94; that stretch reads ERLGECGKVAE. Disordered regions lie at residues 84-202 and 359-527; these read ERLG…PCGN and MDKQ…VHEN. Positions 91–147 form a coiled coil; it reads KVAEEDKEESEEELIFTESNSEVSEEVCTEDEEESQEEEEDSEEEEDSEEEEETTEA. 2 stretches are compositionally biased toward acidic residues: residues 95 to 105 and 113 to 145; these read EDKEESEEELI and VSEE…EETT. Composition is skewed to polar residues over residues 151 to 164 and 170 to 193; these read INGT…NTDN and FKSQ…NSES. A compositionally biased stretch (basic and acidic residues) spans 359 to 377; that stretch reads MDKQRQKRMQEQKQQEGHD. Residues 391–402 show a composition bias toward polar residues; it reads TPGSSPYASPRQ. Serine 407 carries the post-translational modification Phosphoserine. Positions 421–452 are enriched in pro residues; that stretch reads PPSPVAPPPPPPPPPLPPHMLPPPPPPPAPPL. The span at 468 to 479 shows a compositional bias: polar residues; sequence QQESAQRALQNG. The span at 480–490 shows a compositional bias: basic residues; the sequence is QRKKKGKKVKK. Basic and acidic residues predominate over residues 497 to 515; sequence KEIKNSLRSVQEKKMEDSS. The WH2 domain maps to 524–543; sequence VHENLMEAIRGSSIRQLRRV.

It belongs to the tropomodulin family. Can bind at least three actin monomers and thereby provides a nucleus for actin filament formation. Interacts (via N-terminus) with tropomyosin alpha (TPM1) (via N-terminus). May also interact with TPM2 (via N-terminus). Interacts with FLII. Detected in neonate heart (at protein level). Detected in embryonic heart and in pharyngeal arches. Detected in adult heart.

The protein localises to the cytoplasm. The protein resides in the myofibril. It localises to the sarcomere. Its subcellular location is the m line. It is found in the cytoskeleton. Functionally, mediates nucleation of actin filaments and thereby promotes actin polymerization. Plays a role in the regulation of actin filament length. Required for normal sarcomere organization in the heart, and for normal heart function. This is Leiomodin-2 (Lmod2) from Mus musculus (Mouse).